Here is a 70-residue protein sequence, read N- to C-terminus: Protein SlyX homolog (70 aa).

This sequence belongs to the SlyX family.

The protein is Protein SlyX homolog of Rhizobium meliloti (strain 1021) (Ensifer meliloti).